Here is a 421-residue protein sequence, read N- to C-terminus: UV-B-induced protein At3g17800, chloroplastic (421 aa).

Disordered stretches follow at residues 1-40 and 74-95; these read MDALTSSLVRSPIVPSRTSDNGSGSMFLTASGPGFTRSGS and VRASSASNDASSGSSPKPIAPL. Residues 1–75 constitute a chloroplast transit peptide; the sequence is MDALTSSLVR…AKTRRSFVVR (75 aa). Residues 16 to 28 are compositionally biased toward polar residues; that stretch reads SRTSDNGSGSMFL. Residues 74–88 show a composition bias toward low complexity; sequence VRASSASNDASSGSS.

It localises to the plastid. Its subcellular location is the chloroplast. The protein is UV-B-induced protein At3g17800, chloroplastic of Arabidopsis thaliana (Mouse-ear cress).